The primary structure comprises 277 residues: Tryptophan synthase alpha chain (277 aa).

Catalysis depends on proton acceptor residues glutamate 59 and aspartate 70.

It belongs to the TrpA family. In terms of assembly, tetramer of two alpha and two beta chains.

It carries out the reaction (1S,2R)-1-C-(indol-3-yl)glycerol 3-phosphate + L-serine = D-glyceraldehyde 3-phosphate + L-tryptophan + H2O. It participates in amino-acid biosynthesis; L-tryptophan biosynthesis; L-tryptophan from chorismate: step 5/5. Its function is as follows. The alpha subunit is responsible for the aldol cleavage of indoleglycerol phosphate to indole and glyceraldehyde 3-phosphate. In Streptomyces avermitilis (strain ATCC 31267 / DSM 46492 / JCM 5070 / NBRC 14893 / NCIMB 12804 / NRRL 8165 / MA-4680), this protein is Tryptophan synthase alpha chain.